A 527-amino-acid chain; its full sequence is MRCKRCNGSNFERDEDTGNSYCGGCGTLREYDNYEAQLGGIRGPQGTYIRVGTIGRGSVLDYKDKKIYEANNLIEETTERLNLGNKTEVIKSMISKLTDGEFGQGEWFPILIGACCYAVVREEGKGVLSMEEVAYEVGCDLHQLGPMIKRVVDHLDLELREFDLVGLFTKTVTNSPRLTDVDRDKKEKIIKQGTFLMNCALKWFLSTGRRPMPLVVAVLAFVVQVNGVKVKIDDLAKDASVSLTTCKTRYKELSEKLVKVAEEVGLPWAKDVTVKNVLKHSGTLFALMEAKSMKKRKQGTGKELVRTDGFCVEDLVMDCLSKESMYCYDDDARQDTMSRYFDVEGERQLSLCNYDDNISENQLSTKYNEFEDRVCGGTLAKRSQGSSQSMWQRRSVFGMVSTENWWKGKSELSKRLLLKDLLEKDVGLEALPPSYIKGCVAVERRREKIKAAKLRINAIQHPSDNVSEGALSLELEHSKKKRKKGSEIDWEDLVIQTLVLHNVNEEEIEKGHYKTLLDLHVFNSGEV.

Residues 1–30 (MRCKRCNGSNFERDEDTGNSYCGGCGTLRE) form a TFIIB-type zinc finger.

In terms of assembly, can form homodimer. Interacts with TBP2. In terms of tissue distribution, expressed in shoot apical meristems, root tips, primordia of lateral roots, inflorescences, developing pollen grains and embryos.

The protein localises to the nucleus. In terms of biological role, plant-specific TFIIB-related protein that plays important roles in pollen germination and embryogenesis, possibly by regulating gene expression through interaction with TBP2 and the subunits of RNA polymerases. Binds double-stranded DNA in vitro. The protein is Plant-specific TFIIB-related protein PTF2 of Arabidopsis thaliana (Mouse-ear cress).